A 40-amino-acid polypeptide reads, in one-letter code: Entry-fusion complex protein OPG076 (40 aa).

The helical transmembrane segment at 2–22 (LVVIMFFIAFAFCSWLSYSYL) threads the bilayer. Over 23 to 40 (RPYISTKELNKSRMFYIT) the chain is Virion surface.

This sequence belongs to the orthopoxvirus OPG076 family. In terms of assembly, component of the entry fusion complex (EFC) composed of OPG053, OPG076, OPG086, OPG094, OPG095, OPG099, OPG107, OPG143, OPG104, OPG147 and OPG155. Except for OPG095 and OPG053, each of the EFC proteins is required for assembly or stability of the complex. In terms of processing, unglycosylated because produced in viral factories instead of the classic ER -Golgi route.

Its subcellular location is the virion membrane. Functionally, component of the entry fusion complex (EFC), which consists of 11 proteins. During cell infection, this complex mediates entry of the virion core into the host cytoplasm by a two-step mechanism consisting of lipid mixing of the viral and cellular membranes and subsequent pore formation. This chain is Entry-fusion complex protein OPG076 (OPG076), found in Variola virus (isolate Human/India/Ind3/1967) (VARV).